An 84-amino-acid chain; its full sequence is MANSNNFSKTNAQQVRKQNQQSAAGQGQFGTEFASETNAQQVRKQNQQSAGQQGQFGTEFASETDAQQVRQQNQSAEQNKQQNS.

2 stretches are compositionally biased toward polar residues: residues 1 to 25 and 34 to 44; these read MANS…SAAG and ASETNAQQVRK. The segment at 1–84 is disordered; it reads MANSNNFSKT…SAEQNKQQNS (84 aa). Repeats lie at residues 21–47 and 48–74; these read QSAA…KQNQ and QSAG…QQNQ. Composition is skewed to low complexity over residues 45-57 and 71-84; these read QNQQ…GQFG and QQNQ…QQNS.

The protein belongs to the gamma-type SASP family.

Functionally, SASP are proteins degraded in the first minutes of spore germination and provide amino acids for both new protein synthesis and metabolism. These proteins may be involved in dormant spore's high resistance to UV light. In Bacillus subtilis (strain 168), this protein is Small, acid-soluble spore protein gamma-type (sspE).